A 386-amino-acid chain; its full sequence is Pepsin A (386 aa).

An N-terminal signal peptide occupies residues 1–15 (MKWLLLLSLVALSEC). Residues 16-60 (YIYKVPLVKKKSLRKNLMEQGLLQDYLKTHSINPASKYLKEAASM) constitute a propeptide, activation peptide. The Peptidase A1 domain maps to 74 to 383 (YFGTIGIGTP…DRGNNQVGLA (310 aa)). Residue Asp-92 is part of the active site. 2 disulfide bridges follow: Cys-105–Cys-110 and Cys-266–Cys-270. The active site involves Asp-275. The cysteines at positions 309 and 342 are disulfide-linked.

Belongs to the peptidase A1 family.

The protein localises to the secreted. The catalysed reaction is Preferential cleavage: hydrophobic, preferably aromatic, residues in P1 and P1' positions. Cleaves 1-Phe-|-Val-2, 4-Gln-|-His-5, 13-Glu-|-Ala-14, 14-Ala-|-Leu-15, 15-Leu-|-Tyr-16, 16-Tyr-|-Leu-17, 23-Gly-|-Phe-24, 24-Phe-|-Phe-25 and 25-Phe-|-Tyr-26 bonds in the B chain of insulin.. Shows particularly broad specificity; although bonds involving phenylalanine and leucine are preferred, many others are also cleaved to some extent. This Rhinolophus ferrumequinum (Greater horseshoe bat) protein is Pepsin A (PGA).